The sequence spans 900 residues: Protein translocase subunit SecA (900 aa).

ATP-binding positions include Q87, 105–109, and D512; that span reads GEGKT. The interval 849–900 is disordered; the sequence is ERLAQQQQFSHQEEDSLNTGSPAQADRKIGRNDPCPCGSGKKYKQCHGRLQK. The Zn(2+) site is built by C883, C885, C894, and H895. Residues 889 to 900 are compositionally biased toward basic residues; sequence KKYKQCHGRLQK.

The protein belongs to the SecA family. Monomer and homodimer. Part of the essential Sec protein translocation apparatus which comprises SecA, SecYEG and auxiliary proteins SecDF-YajC and YidC. Zn(2+) is required as a cofactor.

The protein resides in the cell inner membrane. It localises to the cytoplasm. It carries out the reaction ATP + H2O + cellular proteinSide 1 = ADP + phosphate + cellular proteinSide 2.. Its function is as follows. Part of the Sec protein translocase complex. Interacts with the SecYEG preprotein conducting channel. Has a central role in coupling the hydrolysis of ATP to the transfer of proteins into and across the cell membrane, serving both as a receptor for the preprotein-SecB complex and as an ATP-driven molecular motor driving the stepwise translocation of polypeptide chains across the membrane. The polypeptide is Protein translocase subunit SecA (Pectobacterium atrosepticum (strain SCRI 1043 / ATCC BAA-672) (Erwinia carotovora subsp. atroseptica)).